The sequence spans 337 residues: tRNA N6-adenosine threonylcarbamoyltransferase (337 aa).

Residues histidine 111 and histidine 115 each coordinate Fe cation. Substrate contacts are provided by residues leucine 134–glycine 138, aspartate 167, glycine 180, and asparagine 272. A Fe cation-binding site is contributed by aspartate 300.

This sequence belongs to the KAE1 / TsaD family. It depends on Fe(2+) as a cofactor.

It is found in the cytoplasm. It carries out the reaction L-threonylcarbamoyladenylate + adenosine(37) in tRNA = N(6)-L-threonylcarbamoyladenosine(37) in tRNA + AMP + H(+). Required for the formation of a threonylcarbamoyl group on adenosine at position 37 (t(6)A37) in tRNAs that read codons beginning with adenine. Is involved in the transfer of the threonylcarbamoyl moiety of threonylcarbamoyl-AMP (TC-AMP) to the N6 group of A37, together with TsaE and TsaB. TsaD likely plays a direct catalytic role in this reaction. This is tRNA N6-adenosine threonylcarbamoyltransferase from Shewanella woodyi (strain ATCC 51908 / MS32).